The sequence spans 270 residues: uncharacterized protein (270 aa).

The protein localises to the cytoplasm. This is an uncharacterized protein from Schizosaccharomyces pombe (strain 972 / ATCC 24843) (Fission yeast).